We begin with the raw amino-acid sequence, 464 residues long: Interstitial collagenase A (464 aa).

The first 17 residues, Met1–Ser17, serve as a signal peptide directing secretion. The propeptide at Phe18–Pro96 is activation peptide. Positions Pro87–Val94 match the Cysteine switch motif. Position 89 (Cys89) interacts with Zn(2+). The interval Ala95–His274 is metalloprotease. Residue Asp155 coordinates Ca(2+). 2 residues coordinate Zn(2+): His165 and Asp167. The Ca(2+) site is built by Asp172 and Gly173. Residue His180 participates in Zn(2+) binding. 3 residues coordinate Ca(2+): Gly187, Gly189, and Asp191. His193 contacts Zn(2+). Ca(2+) is bound by residues Asp195 and Glu198. The N-linked (GlcNAc...) asparagine glycan is linked to Asn202. Position 215 (His215) interacts with Zn(2+). Residue Glu216 is part of the active site. Residues His219 and His225 each contribute to the Zn(2+) site. 2 Hemopexin repeats span residues Pro273 to Leu322 and Pro323 to Pro369. Cys276 and Cys464 are disulfide-bonded. A Ca(2+)-binding site is contributed by Asp283. A glycan (N-linked (GlcNAc...) asparagine) is linked at Asn371. Hemopexin repeat units follow at residues Val372–Ile420 and Asp421–Cys464. Residues Asp376 and Asp425 each contribute to the Ca(2+) site.

The protein belongs to the peptidase M10A family. It depends on Ca(2+) as a cofactor. Requires Zn(2+) as cofactor.

Its subcellular location is the secreted. The protein localises to the extracellular space. It is found in the extracellular matrix. It catalyses the reaction Cleavage of the triple helix of collagen at about three-quarters of the length of the molecule from the N-terminus, at 775-Gly-|-Ile-776 in the alpha1(I) chain. Cleaves synthetic substrates and alpha-macroglobulins at bonds where P1' is a hydrophobic residue.. With respect to regulation, can be activated without removal of the activation peptide. In terms of biological role, cleaves collagens of types I, II, and III at one site in the helical domain. Also cleaves collagens of types VII and X. Able to degrade synthetic peptides and type I and II fibrillar collagen. In Mus musculus (Mouse), this protein is Interstitial collagenase A (Mmp1a).